Reading from the N-terminus, the 130-residue chain is Cuticle protein 14 isoform b (130 aa).

The Chitin-binding type R&amp;R domain maps to 24–90; sequence IGNYNFGYNE…NVHTNEPGTD (67 aa).

The sequence is that of Cuticle protein 14 isoform b from Limulus polyphemus (Atlantic horseshoe crab).